Here is a 414-residue protein sequence, read N- to C-terminus: Histidine--tRNA ligase (414 aa).

Belongs to the class-II aminoacyl-tRNA synthetase family. Homodimer.

It localises to the cytoplasm. It carries out the reaction tRNA(His) + L-histidine + ATP = L-histidyl-tRNA(His) + AMP + diphosphate + H(+). The chain is Histidine--tRNA ligase from Rickettsia rickettsii (strain Iowa).